A 405-amino-acid polypeptide reads, in one-letter code: Acetate kinase (405 aa).

Position 7 (Asn7) interacts with Mg(2+). Position 14 (Lys14) interacts with ATP. Arg90 lines the substrate pocket. Residue Asp147 is the Proton donor/acceptor of the active site. ATP is bound by residues 207–211, 282–284, and 331–335; these read HLGNG, DFR, and GVGEN. Residue Glu384 participates in Mg(2+) binding.

This sequence belongs to the acetokinase family. In terms of assembly, homodimer. Requires Mg(2+) as cofactor. The cofactor is Mn(2+).

The protein resides in the cytoplasm. The enzyme catalyses acetate + ATP = acetyl phosphate + ADP. Its pathway is metabolic intermediate biosynthesis; acetyl-CoA biosynthesis; acetyl-CoA from acetate: step 1/2. Catalyzes the formation of acetyl phosphate from acetate and ATP. Can also catalyze the reverse reaction. The polypeptide is Acetate kinase (Clostridium kluyveri (strain ATCC 8527 / DSM 555 / NBRC 12016 / NCIMB 10680 / K1)).